The sequence spans 250 residues: Triosephosphate isomerase (250 aa).

Position 9-11 (9-11 (NWK)) interacts with substrate. The active-site Electrophile is the H94. E166 serves as the catalytic Proton acceptor. Substrate contacts are provided by residues G172, S212, and 233 to 234 (GG).

This sequence belongs to the triosephosphate isomerase family. In terms of assembly, homodimer.

It is found in the cytoplasm. The enzyme catalyses D-glyceraldehyde 3-phosphate = dihydroxyacetone phosphate. It participates in carbohydrate biosynthesis; gluconeogenesis. Its pathway is carbohydrate degradation; glycolysis; D-glyceraldehyde 3-phosphate from glycerone phosphate: step 1/1. Functionally, involved in the gluconeogenesis. Catalyzes stereospecifically the conversion of dihydroxyacetone phosphate (DHAP) to D-glyceraldehyde-3-phosphate (G3P). This Treponema denticola (strain ATCC 35405 / DSM 14222 / CIP 103919 / JCM 8153 / KCTC 15104) protein is Triosephosphate isomerase.